A 422-amino-acid polypeptide reads, in one-letter code: D-amino acid dehydrogenase (422 aa).

3–17 (VVVIGAGVVGTASAW) contacts FAD.

It belongs to the DadA oxidoreductase family. The cofactor is FAD.

It catalyses the reaction a D-alpha-amino acid + A + H2O = a 2-oxocarboxylate + AH2 + NH4(+). Its pathway is amino-acid degradation; D-alanine degradation; NH(3) and pyruvate from D-alanine: step 1/1. In terms of biological role, oxidative deamination of D-amino acids. In Paramagnetospirillum magneticum (strain ATCC 700264 / AMB-1) (Magnetospirillum magneticum), this protein is D-amino acid dehydrogenase.